Here is a 310-residue protein sequence, read N- to C-terminus: MAPKIFIDGEHGTTGLQIRTRMAGRRDVELLSIPEAERRNAAMREDMLNSADIAILCLPDDASKEAVQMVSANNNVRVIDTSTAFRVNPGWAYGFAEMDGAQADKIKAARFVANPGCYPTGAIGLIRPLRAAGILPDGYPVTVNAVSGYTGGGKQMIAQMENPDHPDAITAPHFLYGLPLTHKHVPEMTVHGLLDRAPIFSPSVGKFAQGMIVQVPLHLDDLAEGTTMESIHAALTAHYAGQDIVTVVPLADSKALARVNAVELEGKDTMKLFVFGTPGGSQVNLVALLDNLGKGASGAAVQNMDLMLAS.

Residue C117 is part of the active site.

This sequence belongs to the NAGSA dehydrogenase family. Type 2 subfamily.

The protein localises to the cytoplasm. It carries out the reaction N-acetyl-L-glutamate 5-semialdehyde + phosphate + NADP(+) = N-acetyl-L-glutamyl 5-phosphate + NADPH + H(+). It functions in the pathway amino-acid biosynthesis; L-arginine biosynthesis; N(2)-acetyl-L-ornithine from L-glutamate: step 3/4. Functionally, catalyzes the NADPH-dependent reduction of N-acetyl-5-glutamyl phosphate to yield N-acetyl-L-glutamate 5-semialdehyde. This is N-acetyl-gamma-glutamyl-phosphate reductase from Rhizobium etli (strain CIAT 652).